A 316-amino-acid chain; its full sequence is Pleckstrin homology domain-containing family F member 1 homolog (316 aa).

Residues 35-131 (VLVGEGVLTK…WMAHINKCVE (97 aa)) enclose the PH domain. Residues 152–212 (DTDASVCMHC…VCDACYERLK (61 aa)) form an FYVE-type zinc finger. The Zn(2+) site is built by Cys158, Cys161, Cys175, Cys178, Cys183, Cys186, Cys204, and Cys207. A disordered region spans residues 215–316 (PSSLGSGEDS…AAVATTGSHC (102 aa)). A compositionally biased stretch (acidic residues) spans 244–253 (SNDEDSDEET). Positions 279–292 (SSTITSPSSATTGS) are enriched in low complexity. Positions 298–316 (VTPSVQSSPAAVATTGSHC) are enriched in polar residues.

In terms of assembly, interacts with Gdi (Rab GDP dissociation inhibitor). As to expression, in ovaries, expressed both in the germ line cells and in the overlying somatic follicular epithelium.

It is found in the apical cell membrane. The protein resides in the endosome membrane. It localises to the cytoplasm. Its subcellular location is the cell cortex. Functionally, functions in the regulation of endosome morphology and late endosome formation. Has a role in controlling trafficking from early to late endosomes and from late endosomes to lysosomes. Important for localization of Gdi to the endosomal membranes. May function in controlling the activity of multiple regulators in the endocytic pathway, perhaps by positively controlling those involved in the early steps of endocytosis such as Rab5 and hrs, and negative regulating those involved in the late stages of endocytosis like car and VhaSFD. The protein is Pleckstrin homology domain-containing family F member 1 homolog of Drosophila melanogaster (Fruit fly).